Reading from the N-terminus, the 341-residue chain is S-adenosylmethionine:tRNA ribosyltransferase-isomerase (341 aa).

This sequence belongs to the QueA family. As to quaternary structure, monomer.

It is found in the cytoplasm. The enzyme catalyses 7-aminomethyl-7-carbaguanosine(34) in tRNA + S-adenosyl-L-methionine = epoxyqueuosine(34) in tRNA + adenine + L-methionine + 2 H(+). It functions in the pathway tRNA modification; tRNA-queuosine biosynthesis. Its function is as follows. Transfers and isomerizes the ribose moiety from AdoMet to the 7-aminomethyl group of 7-deazaguanine (preQ1-tRNA) to give epoxyqueuosine (oQ-tRNA). The protein is S-adenosylmethionine:tRNA ribosyltransferase-isomerase of Clostridium botulinum (strain Langeland / NCTC 10281 / Type F).